The chain runs to 180 residues: ATP synthase subunit delta (180 aa).

Belongs to the ATPase delta chain family. F-type ATPases have 2 components, F(1) - the catalytic core - and F(0) - the membrane proton channel. F(1) has five subunits: alpha(3), beta(3), gamma(1), delta(1), epsilon(1). F(0) has three main subunits: a(1), b(2) and c(10-14). The alpha and beta chains form an alternating ring which encloses part of the gamma chain. F(1) is attached to F(0) by a central stalk formed by the gamma and epsilon chains, while a peripheral stalk is formed by the delta and b chains.

The protein resides in the cell membrane. In terms of biological role, f(1)F(0) ATP synthase produces ATP from ADP in the presence of a proton or sodium gradient. F-type ATPases consist of two structural domains, F(1) containing the extramembraneous catalytic core and F(0) containing the membrane proton channel, linked together by a central stalk and a peripheral stalk. During catalysis, ATP synthesis in the catalytic domain of F(1) is coupled via a rotary mechanism of the central stalk subunits to proton translocation. This protein is part of the stalk that links CF(0) to CF(1). It either transmits conformational changes from CF(0) to CF(1) or is implicated in proton conduction. This is ATP synthase subunit delta from Bacillus cereus (strain 03BB102).